The sequence spans 250 residues: Corrinoid adenosyltransferase MMAB (250 aa).

The N-terminal 32 residues, 1–32 (MAVCGLGSRLGLGSRLGLRGCFGAARLLYPRF), are a transit peptide targeting the mitochondrion. The tract at residues 34–59 (SRGPQGVEDGDRPQPSSKTPRIPKIY) is disordered. ATP-binding positions include 60-63 (TKTG), 68-69 (SS), and lysine 78. Position 134 is a phosphoserine (serine 134). 190–194 (RRAER) serves as a coordination point for ATP. Lysine 211 carries the post-translational modification N6-succinyllysine. Asparagine 214 serves as a coordination point for ATP. Lysine 230 carries the post-translational modification N6-acetyllysine; alternate. Lysine 230 is subject to N6-succinyllysine; alternate.

This sequence belongs to the Cob(I)alamin adenosyltransferase family. In terms of assembly, homotrimer. Expressed in liver and skeletal muscle.

It is found in the mitochondrion. It catalyses the reaction cob(I)alamin-[corrinoid adenosyltransferase] + ATP = apo-[corrinoid adenosyltransferase] + adenosylcob(III)alamin + triphosphate. Functionally, converts cob(I)alamin to adenosylcobalamin (adenosylcob(III)alamin), a coenzyme for methylmalonyl-CoA mutase, therefore participates in the final step of the vitamin B12 conversion. Generates adenosylcobalamin (AdoCbl) and directly delivers the cofactor to MUT in a transfer that is stimulated by ATP-binding to MMAB and gated by MMAA. This Homo sapiens (Human) protein is Corrinoid adenosyltransferase MMAB.